A 657-amino-acid chain; its full sequence is Histidine ammonia-lyase (657 aa).

Residues 253-255 (ASG) constitute a cross-link (5-imidazolinone (Ala-Gly)). A 2,3-didehydroalanine (Ser) modification is found at Ser254. At Thr396 the chain carries Phosphothreonine. Ser635 is subject to Phosphoserine. Phosphothreonine is present on Thr637. A Phosphoserine modification is found at Ser648.

It belongs to the PAL/histidase family. In terms of processing, contains an active site 4-methylidene-imidazol-5-one (MIO), which is formed autocatalytically by cyclization and dehydration of residues Ala-Ser-Gly.

The catalysed reaction is L-histidine = trans-urocanate + NH4(+). It functions in the pathway amino-acid degradation; L-histidine degradation into L-glutamate; N-formimidoyl-L-glutamate from L-histidine: step 1/3. This chain is Histidine ammonia-lyase (Hal), found in Mus musculus (Mouse).